Here is a 265-residue protein sequence, read N- to C-terminus: 5'-nucleotidase SurE (265 aa).

4 residues coordinate a divalent metal cation: aspartate 8, aspartate 9, serine 39, and asparagine 96.

Belongs to the SurE nucleotidase family. It depends on a divalent metal cation as a cofactor.

The protein resides in the cytoplasm. The catalysed reaction is a ribonucleoside 5'-phosphate + H2O = a ribonucleoside + phosphate. In terms of biological role, nucleotidase that shows phosphatase activity on nucleoside 5'-monophosphates. The protein is 5'-nucleotidase SurE of Dehalococcoides mccartyi (strain ATCC BAA-2100 / JCM 16839 / KCTC 5957 / BAV1).